We begin with the raw amino-acid sequence, 609 residues long: UvrABC system protein C (609 aa).

The GIY-YIG domain maps to 16 to 94; that stretch reads SSPGVYRMYD…IKQYMPKYNV (79 aa). The UVR domain maps to 203 to 238; it reads HQVMSVLVGKMEQAASDMRYEQAALYRDQITALRRV.

The protein belongs to the UvrC family. Interacts with UvrB in an incision complex.

The protein resides in the cytoplasm. Functionally, the UvrABC repair system catalyzes the recognition and processing of DNA lesions. UvrC both incises the 5' and 3' sides of the lesion. The N-terminal half is responsible for the 3' incision and the C-terminal half is responsible for the 5' incision. This Shewanella halifaxensis (strain HAW-EB4) protein is UvrABC system protein C.